The primary structure comprises 463 residues: Abscisic acid 8'-hydroxylase 3 (463 aa).

A helical transmembrane segment spans residues 6 to 26 (LFLTLSAAALFLCLLRFIAGV). A heme-binding site is contributed by C411.

It belongs to the cytochrome P450 family. Heme is required as a cofactor. In terms of tissue distribution, mainly expressed in flower buds, flowers, rosette leaves and roots. Lower expression in mature siliques and inflorescence stems. Not expressed in dry seeds.

It localises to the membrane. The catalysed reaction is 2-cis-(+)-abscisate + reduced [NADPH--hemoprotein reductase] + O2 = (+)-8'-hydroxyabscisate + oxidized [NADPH--hemoprotein reductase] + H2O + H(+). The protein operates within plant hormone degradation; abscisic acid degradation. With respect to regulation, inhibited by tetcyclcis, but not by metyrapone. Involved in the oxidative degradation of abscisic acid, but not in the isomerization of the produced 8'-hydroxyabscisic acid (8'-OH-ABA) to (-)-phaseic acid (PA). Involved in the control of postgermination growth. The protein is Abscisic acid 8'-hydroxylase 3 (CYP707A3) of Arabidopsis thaliana (Mouse-ear cress).